The sequence spans 295 residues: Probable intramembrane protease C25B8.17 (295 aa).

The helical transmembrane segment at 1–21 (MEGVILASSALFTVYIGAKWS) threads the bilayer. Residues 22–35 (AQEEEPEEKQLINK) are Cytoplasmic-facing. Residues 36–56 (RLAVLFPIFGGVTLVLMYLAL) traverse the membrane as a helical segment. The Lumenal segment spans residues 57 to 63 (RYLSKEY). Residues 64-84 (IQLILQGYASLASIICFVRSF) form a helical membrane-spanning segment. Residues 85–89 (NPKTT) are Cytoplasmic-facing. The helical transmembrane segment at 90-106 (FGKITATMSSIAIALFY) threads the bilayer. Topologically, residues 107–111 (FKTKH) are lumenal. The chain crosses the membrane as a helical span at residues 112–130 (WMASNILAWALAANSISIM). Residues 131 to 139 (RIDSYNTGA) are Cytoplasmic-facing. A helical membrane pass occupies residues 140 to 160 (LLLGALFFYDIYFVFGTEVMV). Residue D149 is part of the active site. At 161 to 183 (TVATGIDIPAKYVLPQFKNPTRL) the chain is on the lumenal side. A helical transmembrane segment spans residues 184–204 (SMLGLGDIVMPGLMLALMYRF). D190 is an active-site residue. The Cytoplasmic portion of the chain corresponds to 205–221 (DLHYYINSTSQPKKHST). The helical transmembrane segment at 222-244 (YFRNTFIAYGLGLGVTNFALYYF) threads the bilayer. Over 245 to 249 (KAAQP) the chain is Lumenal. Positions 249-251 (PAL) match the PAL motif. The helical transmembrane segment at 250 to 268 (ALLYLSPACIVAPLLTAWY) threads the bilayer. At 269–295 (RDELKTLFSFRSETEDETDEQDKCKST) the chain is on the cytoplasmic side.

The protein belongs to the peptidase A22B family.

Its subcellular location is the endoplasmic reticulum membrane. It localises to the golgi apparatus membrane. The chain is Probable intramembrane protease C25B8.17 from Schizosaccharomyces pombe (strain 972 / ATCC 24843) (Fission yeast).